A 340-amino-acid polypeptide reads, in one-letter code: Adenosine kinase (340 aa).

The active site involves aspartate 293.

The protein belongs to the carbohydrate kinase PfkB family. The cofactor is Mg(2+).

The enzyme catalyses adenosine + ATP = AMP + ADP + H(+). It participates in purine metabolism; AMP biosynthesis via salvage pathway; AMP from adenosine: step 1/1. In terms of biological role, ATP dependent phosphorylation of adenosine and other related nucleoside analogs to monophosphate derivatives. ADO1 does not play a major role in adenine utilization in yeast. Its physiological role could primarily be to recycle adenosine produced by the methyl cycle. This chain is Adenosine kinase, found in Saccharomyces cerevisiae (strain ATCC 204508 / S288c) (Baker's yeast).